The primary structure comprises 128 residues: Large ribosomal subunit protein bL17 (128 aa).

The protein belongs to the bacterial ribosomal protein bL17 family. Part of the 50S ribosomal subunit. Contacts protein L32.

The polypeptide is Large ribosomal subunit protein bL17 (Proteus mirabilis (strain HI4320)).